The following is a 122-amino-acid chain: Large ribosomal subunit protein uL14 (122 aa).

This sequence belongs to the universal ribosomal protein uL14 family. As to quaternary structure, part of the 50S ribosomal subunit. Forms a cluster with proteins L3 and L19. In the 70S ribosome, L14 and L19 interact and together make contacts with the 16S rRNA in bridges B5 and B8.

In terms of biological role, binds to 23S rRNA. Forms part of two intersubunit bridges in the 70S ribosome. This chain is Large ribosomal subunit protein uL14, found in Corynebacterium aurimucosum (strain ATCC 700975 / DSM 44827 / CIP 107346 / CN-1) (Corynebacterium nigricans).